The following is a 205-amino-acid chain: Small ribosomal subunit protein uS4 (205 aa).

Positions 14-49 (RMGENIWGRPKSPVNRREYGPGQHGQRRKGKMSDFG) are disordered. The 64-residue stretch at 94-157 (SRLDAIVYRA…KQLVTVLEAV (64 aa)) folds into the S4 RNA-binding domain.

It belongs to the universal ribosomal protein uS4 family. Part of the 30S ribosomal subunit. Contacts protein S5. The interaction surface between S4 and S5 is involved in control of translational fidelity.

In terms of biological role, one of the primary rRNA binding proteins, it binds directly to 16S rRNA where it nucleates assembly of the body of the 30S subunit. Its function is as follows. With S5 and S12 plays an important role in translational accuracy. The sequence is that of Small ribosomal subunit protein uS4 from Agrobacterium fabrum (strain C58 / ATCC 33970) (Agrobacterium tumefaciens (strain C58)).